The primary structure comprises 85 residues: Small integral membrane protein 2 (85 aa).

The helical transmembrane segment at 21-43 (GHAISILFGFWTSFICDTYIVLA) threads the bilayer. A disordered region spans residues 51–85 (SPDVSASSDEPYARIQQSRRQCHAEEDQSQVPEAG).

The protein resides in the membrane. This chain is Small integral membrane protein 2 (SMIM2), found in Homo sapiens (Human).